We begin with the raw amino-acid sequence, 625 residues long: Tyrosine-protein kinase ITK/TSK (625 aa).

One can recognise a PH domain in the interval 4 to 117 (FILLEEQLIK…WVLTLKEETR (114 aa)). Residues 119–155 (NNSLVSKYHPNFWMDGRWRCCSQLEKPAVGCAPYDPS) form a Btk-type zinc finger. Positions 127, 138, 139, and 149 each coordinate Zn(2+). The segment at 153–174 (DPSKNASKKPLPPTPEDNRRSF) is disordered. The 61-residue stretch at 177–237 (PEETLVIALY…PSSYLVEKSP (61 aa)) folds into the SH3 domain. Position 186 is a phosphotyrosine; by autocatalysis (Tyr-186). The SH2 domain occupies 245-343 (WYNKSISRDK…GLVTRLRYPV (99 aa)). Positions 368–620 (LTFVQEIGSG…SQLLSQLAEI (253 aa)) constitute a Protein kinase domain. Residues 374-382 (IGSGQFGLV) and Lys-396 each bind ATP. Asp-487 functions as the Proton acceptor in the catalytic mechanism. Tyr-517 carries the post-translational modification Phosphotyrosine; by LCK. Ser-570 is modified (phosphoserine).

Belongs to the protein kinase superfamily. Tyr protein kinase family. TEC subfamily. In terms of assembly, homooligomerizes; this association negatively regulates kinase activity. Interacts with PPIA/CYPA; this interaction regulates TCR signal strength via a proline-directed conformational switch in ITK. Interacts with THEMIS. Interacts with FASLG. Interacts with VAV1; this interaction is important for VAV1 localization and TCR-induced actin polarization. Interacts with TBX21. It depends on Zn(2+) as a cofactor. Phosphorylated at Tyr-517 in the activation loop of the kinase domain by LCK. Subsequent autophosphorylation at Tyr-186 leads to the kinase activation. The autophosphorylated Tyr-186 lies within the substrate binding sequence of the SH3 domain. In terms of processing, ubiquitinated. As to expression, is detected in the thymus, lymph node and very faintly in the spleen, but is not detected in the liver, lung, kidney, heart, brain, intestine or testis. Expressed in T-lymphocytes and mast cells. It may also be expressed in natural killer cells.

Its subcellular location is the cytoplasm. The protein localises to the nucleus. It catalyses the reaction L-tyrosyl-[protein] + ATP = O-phospho-L-tyrosyl-[protein] + ADP + H(+). Functionally, tyrosine kinase that plays an essential role in regulation of the adaptive immune response. Regulates the development, function and differentiation of conventional T-cells and nonconventional NKT-cells. When antigen presenting cells (APC) activate T-cell receptor (TCR), a series of phosphorylation lead to the recruitment of ITK to the cell membrane, in the vicinity of the stimulated TCR receptor, where it is phosphorylated by LCK. Phosphorylation leads to ITK autophosphorylation and full activation. Once activated, phosphorylates PLCG1, leading to the activation of this lipase and subsequent cleavage of its substrates. In turn, the endoplasmic reticulum releases calcium in the cytoplasm and the nuclear activator of activated T-cells (NFAT) translocates into the nucleus to perform its transcriptional duty. Phosphorylates 2 essential adapter proteins: the linker for activation of T-cells/LAT protein and LCP2. Then, a large number of signaling molecules such as VAV1 are recruited and ultimately lead to lymphokine production, T-cell proliferation and differentiation. Required for TCR-mediated calcium response in gamma-delta T-cells, may also be involved in the modulation of the transcriptomic signature in the Vgamma2-positive subset of immature gamma-delta T-cells. Phosphorylates TBX21 at 'Tyr-525' and mediates its interaction with GATA3. The sequence is that of Tyrosine-protein kinase ITK/TSK (Itk) from Mus musculus (Mouse).